Here is a 212-residue protein sequence, read N- to C-terminus: Stromal cell-derived factor 2-like protein (212 aa).

A signal peptide spans 1 to 19; the sequence is MKSLFLILILCITIPLIFA. An N-linked (GlcNAc...) asparagine glycan is attached at Asn20. 3 consecutive MIR domains span residues 29–86, 94–149, and 151–206; these read ITKV…IKGP, GTVV…VETE, and GKEW…TEEG.

It localises to the secreted. The protein is Stromal cell-derived factor 2-like protein of Dictyostelium discoideum (Social amoeba).